The following is a 157-amino-acid chain: NAD(P)H-quinone oxidoreductase subunit N (157 aa).

This sequence belongs to the complex I NdhN subunit family. In terms of assembly, NDH-1 can be composed of about 15 different subunits; different subcomplexes with different compositions have been identified which probably have different functions.

Its subcellular location is the cellular thylakoid membrane. It catalyses the reaction a plastoquinone + NADH + (n+1) H(+)(in) = a plastoquinol + NAD(+) + n H(+)(out). The enzyme catalyses a plastoquinone + NADPH + (n+1) H(+)(in) = a plastoquinol + NADP(+) + n H(+)(out). Its function is as follows. NDH-1 shuttles electrons from an unknown electron donor, via FMN and iron-sulfur (Fe-S) centers, to quinones in the respiratory and/or the photosynthetic chain. The immediate electron acceptor for the enzyme in this species is believed to be plastoquinone. Couples the redox reaction to proton translocation, and thus conserves the redox energy in a proton gradient. Cyanobacterial NDH-1 also plays a role in inorganic carbon-concentration. In Picosynechococcus sp. (strain ATCC 27264 / PCC 7002 / PR-6) (Agmenellum quadruplicatum), this protein is NAD(P)H-quinone oxidoreductase subunit N.